The primary structure comprises 361 residues: Chorismate synthase (361 aa).

Residues arginine 48 and arginine 54 each coordinate NADP(+). FMN contacts are provided by residues 125–127, 238–239, glycine 278, 293–297, and arginine 319; these read RSS, NA, and KPTSS.

This sequence belongs to the chorismate synthase family. In terms of assembly, homotetramer. FMNH2 serves as cofactor.

It carries out the reaction 5-O-(1-carboxyvinyl)-3-phosphoshikimate = chorismate + phosphate. It functions in the pathway metabolic intermediate biosynthesis; chorismate biosynthesis; chorismate from D-erythrose 4-phosphate and phosphoenolpyruvate: step 7/7. Its function is as follows. Catalyzes the anti-1,4-elimination of the C-3 phosphate and the C-6 proR hydrogen from 5-enolpyruvylshikimate-3-phosphate (EPSP) to yield chorismate, which is the branch point compound that serves as the starting substrate for the three terminal pathways of aromatic amino acid biosynthesis. This reaction introduces a second double bond into the aromatic ring system. The polypeptide is Chorismate synthase (Shigella flexneri serotype 5b (strain 8401)).